The following is a 314-amino-acid chain: Protein phosphatase PTC7 homolog fig (314 aa).

Positions 43–309 constitute a PPM-type phosphatase domain; that stretch reads PYLVTVVQGR…DDITLILSSV (267 aa). Asp87, Gly88, and Asp232 together coordinate Mn(2+).

The protein belongs to the PP2C family. Mg(2+) is required as a cofactor. The cofactor is Mn(2+).

The enzyme catalyses O-phospho-L-seryl-[protein] + H2O = L-seryl-[protein] + phosphate. It catalyses the reaction O-phospho-L-threonyl-[protein] + H2O = L-threonyl-[protein] + phosphate. The chain is Protein phosphatase PTC7 homolog fig from Drosophila melanogaster (Fruit fly).